A 130-amino-acid chain; its full sequence is Small ribosomal subunit protein uS9 (130 aa).

The segment at 98–130 (LKKAGMLTRDPRMKERKKYGLKKARKASQFSKR) is disordered. Residues 111-130 (KERKKYGLKKARKASQFSKR) show a composition bias toward basic residues.

It belongs to the universal ribosomal protein uS9 family.

In Lacticaseibacillus casei (strain BL23) (Lactobacillus casei), this protein is Small ribosomal subunit protein uS9.